A 383-amino-acid polypeptide reads, in one-letter code: Protein COS7 (383 aa).

The Cytoplasmic segment spans residues 1 to 42 (MKENEVKDEKSVDVLSFKQLESQKIVLPQDLFRSSFTWFCYE). Residues 43 to 63 (IYKSLAFRIWMLLWLPLSVWW) form a helical membrane-spanning segment. Over 64-72 (KLSNNCIYP) the chain is Extracellular. A helical transmembrane segment spans residues 73 to 93 (LIVSLLVLFLGPIFVLVICGL). The Cytoplasmic segment spans residues 94 to 232 (SRKRSLSKQL…RSKLTWFLKR (139 aa)). A helical transmembrane segment spans residues 233 to 253 (IFTIYSLPLWLAFLNCICVSQ). Histidine 254 is a topological domain (extracellular). A helical membrane pass occupies residues 255 to 275 (FCLAFRILCPGLFFLMMVWLF). Residues 276-383 (QNMRTTALLV…SRNEESLMKK (108 aa)) are Cytoplasmic-facing.

The protein belongs to the DUP/COS family.

It is found in the membrane. The polypeptide is Protein COS7 (COS7) (Saccharomyces cerevisiae (strain ATCC 204508 / S288c) (Baker's yeast)).